The following is a 379-amino-acid chain: Anhydro-N-acetylmuramic acid kinase (379 aa).

9–16 (GTSADGVD) is a binding site for ATP.

Belongs to the anhydro-N-acetylmuramic acid kinase family.

It carries out the reaction 1,6-anhydro-N-acetyl-beta-muramate + ATP + H2O = N-acetyl-D-muramate 6-phosphate + ADP + H(+). It functions in the pathway amino-sugar metabolism; 1,6-anhydro-N-acetylmuramate degradation. It participates in cell wall biogenesis; peptidoglycan recycling. Its function is as follows. Catalyzes the specific phosphorylation of 1,6-anhydro-N-acetylmuramic acid (anhMurNAc) with the simultaneous cleavage of the 1,6-anhydro ring, generating MurNAc-6-P. Is required for the utilization of anhMurNAc either imported from the medium or derived from its own cell wall murein, and thus plays a role in cell wall recycling. This chain is Anhydro-N-acetylmuramic acid kinase, found in Synechococcus sp. (strain CC9605).